We begin with the raw amino-acid sequence, 695 residues long: Elongation factor G (695 aa).

The tr-type G domain occupies Lys-10–Leu-289. GTP is bound by residues Ala-19 to Thr-26, Asp-83 to His-87, and Asn-137 to Asp-140.

The protein belongs to the TRAFAC class translation factor GTPase superfamily. Classic translation factor GTPase family. EF-G/EF-2 subfamily.

It is found in the cytoplasm. In terms of biological role, catalyzes the GTP-dependent ribosomal translocation step during translation elongation. During this step, the ribosome changes from the pre-translocational (PRE) to the post-translocational (POST) state as the newly formed A-site-bound peptidyl-tRNA and P-site-bound deacylated tRNA move to the P and E sites, respectively. Catalyzes the coordinated movement of the two tRNA molecules, the mRNA and conformational changes in the ribosome. In Protochlamydia amoebophila (strain UWE25), this protein is Elongation factor G.